We begin with the raw amino-acid sequence, 85 residues long: Putative membrane protein insertion efficiency factor (85 aa).

It belongs to the UPF0161 family.

Its subcellular location is the cell membrane. In terms of biological role, could be involved in insertion of integral membrane proteins into the membrane. This Leifsonia xyli subsp. xyli (strain CTCB07) protein is Putative membrane protein insertion efficiency factor.